The chain runs to 182 residues: MSLNRNDKAAVVAEVAAQVARSQTLALAEYRGLTVADLDKLRRTAREQGVYLHVLKNTLARRAVAGTAFESAAESMSGPLIYGFSEDAIAAAKVVVDFAKTNDKLVLKGGAYAGKALDVNGIKALASIPSKEVLLAQFLGLLQSPISRTARVLAALAEKRAVPAAEEAVEATADVATEAAAG.

It belongs to the universal ribosomal protein uL10 family. In terms of assembly, part of the ribosomal stalk of the 50S ribosomal subunit. The N-terminus interacts with L11 and the large rRNA to form the base of the stalk. The C-terminus forms an elongated spine to which L12 dimers bind in a sequential fashion forming a multimeric L10(L12)X complex.

Functionally, forms part of the ribosomal stalk, playing a central role in the interaction of the ribosome with GTP-bound translation factors. The polypeptide is Large ribosomal subunit protein uL10 (Leptothrix cholodnii (strain ATCC 51168 / LMG 8142 / SP-6) (Leptothrix discophora (strain SP-6))).